Consider the following 264-residue polypeptide: Thymidylate synthase (264 aa).

R21 serves as a coordination point for dUMP. (6R)-5,10-methylene-5,6,7,8-tetrahydrofolate is bound at residue H51. Position 126-127 (126-127 (RR)) interacts with dUMP. The Nucleophile role is filled by C146. DUMP is bound by residues 166 to 169 (RSAD), N177, and 207 to 209 (HLY). Residue D169 participates in (6R)-5,10-methylene-5,6,7,8-tetrahydrofolate binding. A263 is a (6R)-5,10-methylene-5,6,7,8-tetrahydrofolate binding site.

Belongs to the thymidylate synthase family. Bacterial-type ThyA subfamily. Homodimer.

Its subcellular location is the cytoplasm. It catalyses the reaction dUMP + (6R)-5,10-methylene-5,6,7,8-tetrahydrofolate = 7,8-dihydrofolate + dTMP. Its pathway is pyrimidine metabolism; dTTP biosynthesis. Its function is as follows. Catalyzes the reductive methylation of 2'-deoxyuridine-5'-monophosphate (dUMP) to 2'-deoxythymidine-5'-monophosphate (dTMP) while utilizing 5,10-methylenetetrahydrofolate (mTHF) as the methyl donor and reductant in the reaction, yielding dihydrofolate (DHF) as a by-product. This enzymatic reaction provides an intracellular de novo source of dTMP, an essential precursor for DNA biosynthesis. This chain is Thymidylate synthase, found in Hyphomonas neptunium (strain ATCC 15444).